Here is a 92-residue protein sequence, read N- to C-terminus: UPF0250 protein VC0395_A0469/VC395_0960 (92 aa).

This sequence belongs to the UPF0250 family.

The polypeptide is UPF0250 protein VC0395_A0469/VC395_0960 (Vibrio cholerae serotype O1 (strain ATCC 39541 / Classical Ogawa 395 / O395)).